Consider the following 132-residue polypeptide: Small ribosomal subunit protein uS11 (132 aa).

This sequence belongs to the universal ribosomal protein uS11 family. As to quaternary structure, part of the 30S ribosomal subunit. Interacts with proteins S7 and S18. Binds to IF-3.

Functionally, located on the platform of the 30S subunit, it bridges several disparate RNA helices of the 16S rRNA. Forms part of the Shine-Dalgarno cleft in the 70S ribosome. In Bifidobacterium animalis subsp. lactis (strain AD011), this protein is Small ribosomal subunit protein uS11.